A 97-amino-acid chain; its full sequence is MAMIKMSPEEIRAKSQSYGQGSDQIRQILSDLTRAQGEIAANWEGQAFSRFEEQFQQLSPKVEKFAQLLEEIKQQLNSTADAVQEQDQQLSNNFGLQ.

The stretch at 61 to 93 (KVEKFAQLLEEIKQQLNSTADAVQEQDQQLSNN) forms a coiled coil.

Belongs to the WXG100 family. sagEsxA-like subfamily. In terms of assembly, forms both homodimers and heterodimers with EsxC.

The protein localises to the secreted. Virulence factor that is important for the establishment of infection in the host. EsxA is required for EsxB synthesis as well as secretion. Modulates host cell apoptotic pathways and mediates together with EsxB the release of S.aureus from the host cell. By acting on apoptosis, plays a role in the modulation of dendritic cell-mediated immunity. The chain is Type VII secretion system extracellular protein A from Staphylococcus aureus (strain USA300).